The sequence spans 282 residues: Acyl-CoA-binding domain-containing protein 6 (282 aa).

Positions 1–34 are disordered; it reads MATPFLPAGATTGDSGGELSSGDDSGDLESFQTP. S41 is subject to Phosphoserine. Positions 42–127 constitute an ACB domain; the sequence is LAELFEKAAA…VKKLDPGWNP (86 aa). An acyl-CoA contacts are provided by residues 69–73 and K95; that span reads YARYK. Position 106 is a phosphoserine (S106). Position 114 (Y114) interacts with an acyl-CoA. ANK repeat units lie at residues 191–220 and 224–253; these read EGRA…GINC and EGQT…DPTL.

As to quaternary structure, monomer.

The protein resides in the cytoplasm. The protein localises to the nucleus. Functionally, binds long-chain acyl-coenzyme A molecules with a strong preference for unsaturated C18:1-CoA, lower affinity for unsaturated C20:4-CoA, and very weak affinity for saturated C16:0-CoA. Does not bind fatty acids. Plays a role in protein N-myristoylation. This chain is Acyl-CoA-binding domain-containing protein 6 (Acbd6), found in Rattus norvegicus (Rat).